The sequence spans 364 residues: Spermatogenesis-associated protein 22 (364 aa).

5 stretches are compositionally biased toward polar residues: residues 1–13 (MKRN…TRST), 30–48 (QPLT…NASD), 73–108 (KTVN…SKSD), 137–169 (LMTN…LPNQ), and 177–189 (QTKS…STMR). Disordered regions lie at residues 1–51 (MKRN…DNYD) and 70–189 (PLTK…STMR).

In terms of assembly, component of a multiprotein complex with MEIOB and RPA2. Interacts with MEIOB. Interacts with the complex BRME1:HSF2BP:BRCA2.

The protein localises to the chromosome. Its function is as follows. Meiosis-specific protein required for homologous recombination in meiosis I. This Bos taurus (Bovine) protein is Spermatogenesis-associated protein 22 (SPATA22).